We begin with the raw amino-acid sequence, 102 residues long: MYKADYKQIAATPSFQAFLKQKRAFIVPSAIFFFVFYFSLPVLTSYFTFLNAPAIGAVSWAWLFAIAQFAMTWILSTVYSRRAAHFDKYVSALKEDLKGEQT.

2 helical membrane passes run 24–44 (AFIV…PVLT) and 55–75 (IGAV…TWIL).

The protein resides in the cell membrane. This is an uncharacterized protein from Bacillus subtilis (strain 168).